The sequence spans 588 residues: Adenylate kinase 5, chloroplastic (588 aa).

The interval 1–34 is disordered; it reads MASLSLSSAHFSSTSSSSRSSISTSSLSPSSTSL. The transit peptide at 1–73 directs the protein to the chloroplast; that stretch reads MASLSLSSAH…SFSTSNSQIR (73 aa). 89 to 94 contributes to the ATP binding site; the sequence is ASGKGT. The interval 109–138 is NMP; the sequence is STGDLLRAEVSSGTDIGKRAKEFMNSGSLV. Residues Arg115, 136–138, 165–168, and Gln172 each bind AMP; these read SLV and GFPR. The LID stretch occupies residues 202 to 235; the sequence is GRRLDPVTGKIYHIKNYPPESDEIKARLVTRPDD. Arg203 serves as a coordination point for ATP. Positions 232 and 243 each coordinate AMP.

The protein belongs to the adenylate kinase family. Monomer.

The protein localises to the plastid. Its subcellular location is the chloroplast. It catalyses the reaction AMP + ATP = 2 ADP. In terms of biological role, catalyzes the reversible transfer of the terminal phosphate group between ATP and AMP. This is Adenylate kinase 5, chloroplastic from Arabidopsis thaliana (Mouse-ear cress).